Reading from the N-terminus, the 308-residue chain is UPF0282 protein STK_23220 (308 aa).

Belongs to the UPF0282 family.

The protein is UPF0282 protein STK_23220 of Sulfurisphaera tokodaii (strain DSM 16993 / JCM 10545 / NBRC 100140 / 7) (Sulfolobus tokodaii).